The primary structure comprises 354 residues: N-acetyl-gamma-glutamyl-phosphate reductase (354 aa).

The active site involves cysteine 156.

This sequence belongs to the NAGSA dehydrogenase family. Type 1 subfamily.

The protein localises to the cytoplasm. The catalysed reaction is N-acetyl-L-glutamate 5-semialdehyde + phosphate + NADP(+) = N-acetyl-L-glutamyl 5-phosphate + NADPH + H(+). Its pathway is amino-acid biosynthesis; L-arginine biosynthesis; N(2)-acetyl-L-ornithine from L-glutamate: step 3/4. Catalyzes the NADPH-dependent reduction of N-acetyl-5-glutamyl phosphate to yield N-acetyl-L-glutamate 5-semialdehyde. The protein is N-acetyl-gamma-glutamyl-phosphate reductase of Bordetella bronchiseptica (strain ATCC BAA-588 / NCTC 13252 / RB50) (Alcaligenes bronchisepticus).